The primary structure comprises 163 residues: Nucleotide-binding protein NFA_51200 (163 aa).

This sequence belongs to the YajQ family.

In terms of biological role, nucleotide-binding protein. In Nocardia farcinica (strain IFM 10152), this protein is Nucleotide-binding protein NFA_51200.